A 188-amino-acid chain; its full sequence is MKLIVGLGNPGKKFLNTRHNIGFVVVDSFLSQNKYQTLKEDTNAHIYQINFNNHQTLLIKPQTYMNLSGEVVKKIINKYRIKIENILVIVDDIYLDEGKLKLKMQGGHGGHNGLRNIIDRLCTKQFKRLKIGVSLDSCMPLDQYLLTPVNASSQKNILKNIDIINKIIFNFIQDVDFNILMNGYNSKH.

TRNA is bound at residue F14. H19 acts as the Proton acceptor in catalysis. TRNA-binding residues include Y64, N66, and N112.

Belongs to the PTH family. Monomer.

The protein localises to the cytoplasm. It catalyses the reaction an N-acyl-L-alpha-aminoacyl-tRNA + H2O = an N-acyl-L-amino acid + a tRNA + H(+). Functionally, hydrolyzes ribosome-free peptidyl-tRNAs (with 1 or more amino acids incorporated), which drop off the ribosome during protein synthesis, or as a result of ribosome stalling. In terms of biological role, catalyzes the release of premature peptidyl moieties from peptidyl-tRNA molecules trapped in stalled 50S ribosomal subunits, and thus maintains levels of free tRNAs and 50S ribosomes. In Aster yellows witches'-broom phytoplasma (strain AYWB), this protein is Peptidyl-tRNA hydrolase.